We begin with the raw amino-acid sequence, 247 residues long: Ubiquinone biosynthesis O-methyltransferase (247 aa).

S-adenosyl-L-methionine-binding residues include Arg-39, Gly-70, Asp-91, and Met-134.

This sequence belongs to the methyltransferase superfamily. UbiG/COQ3 family.

It catalyses the reaction a 3-demethylubiquinol + S-adenosyl-L-methionine = a ubiquinol + S-adenosyl-L-homocysteine + H(+). The enzyme catalyses a 3-(all-trans-polyprenyl)benzene-1,2-diol + S-adenosyl-L-methionine = a 2-methoxy-6-(all-trans-polyprenyl)phenol + S-adenosyl-L-homocysteine + H(+). It functions in the pathway cofactor biosynthesis; ubiquinone biosynthesis. Its function is as follows. O-methyltransferase that catalyzes the 2 O-methylation steps in the ubiquinone biosynthetic pathway. The chain is Ubiquinone biosynthesis O-methyltransferase from Cereibacter sphaeroides (strain ATCC 17029 / ATH 2.4.9) (Rhodobacter sphaeroides).